The chain runs to 61 residues: Short neurotoxin 2 (61 aa).

4 disulfides stabilise this stretch: Cys3–Cys23, Cys17–Cys40, Cys42–Cys53, and Cys54–Cys59.

Belongs to the three-finger toxin family. Short-chain subfamily. Type I alpha-neurotoxin sub-subfamily. In terms of tissue distribution, expressed by the venom gland.

The protein localises to the secreted. Its function is as follows. Binds to muscle nicotinic acetylcholine receptor (nAChR) and inhibit acetylcholine from binding to the receptor, thereby impairing neuromuscular transmission. This Naja haje haje (Egyptian cobra) protein is Short neurotoxin 2.